Consider the following 500-residue polypeptide: Aspartyl/glutamyl-tRNA(Asn/Gln) amidotransferase subunit B (500 aa).

This sequence belongs to the GatB/GatE family. GatB subfamily. Heterotrimer of A, B and C subunits.

The enzyme catalyses L-glutamyl-tRNA(Gln) + L-glutamine + ATP + H2O = L-glutaminyl-tRNA(Gln) + L-glutamate + ADP + phosphate + H(+). The catalysed reaction is L-aspartyl-tRNA(Asn) + L-glutamine + ATP + H2O = L-asparaginyl-tRNA(Asn) + L-glutamate + ADP + phosphate + 2 H(+). Its function is as follows. Allows the formation of correctly charged Asn-tRNA(Asn) or Gln-tRNA(Gln) through the transamidation of misacylated Asp-tRNA(Asn) or Glu-tRNA(Gln) in organisms which lack either or both of asparaginyl-tRNA or glutaminyl-tRNA synthetases. The reaction takes place in the presence of glutamine and ATP through an activated phospho-Asp-tRNA(Asn) or phospho-Glu-tRNA(Gln). This is Aspartyl/glutamyl-tRNA(Asn/Gln) amidotransferase subunit B from Brucella ovis (strain ATCC 25840 / 63/290 / NCTC 10512).